The chain runs to 377 residues: N5-carboxyaminoimidazole ribonucleotide synthase (377 aa).

ATP is bound by residues Arg93, Lys133, 138-144, 175-178, Glu183, His206, and 257-258; these read GYDGKGQ, EEFV, and NE. Residues 97 to 287 enclose the ATP-grasp domain; sequence KALLDNAGVR…QFENHLRAVC (191 aa).

It belongs to the PurK/PurT family. In terms of assembly, homodimer.

The enzyme catalyses 5-amino-1-(5-phospho-beta-D-ribosyl)imidazole + hydrogencarbonate + ATP = 5-carboxyamino-1-(5-phospho-D-ribosyl)imidazole + ADP + phosphate + 2 H(+). It participates in purine metabolism; IMP biosynthesis via de novo pathway; 5-amino-1-(5-phospho-D-ribosyl)imidazole-4-carboxylate from 5-amino-1-(5-phospho-D-ribosyl)imidazole (N5-CAIR route): step 1/2. Its function is as follows. Catalyzes the ATP-dependent conversion of 5-aminoimidazole ribonucleotide (AIR) and HCO(3)(-) to N5-carboxyaminoimidazole ribonucleotide (N5-CAIR). This Vibrio parahaemolyticus serotype O3:K6 (strain RIMD 2210633) protein is N5-carboxyaminoimidazole ribonucleotide synthase.